Reading from the N-terminus, the 176-residue chain is Large ribosomal subunit protein eL20A (176 aa).

It belongs to the eukaryotic ribosomal protein eL20 family. As to quaternary structure, component of the large ribosomal subunit (LSU). Mature yeast ribosomes consist of a small (40S) and a large (60S) subunit. The 40S small subunit contains 1 molecule of ribosomal RNA (18S rRNA) and at least 33 different proteins. The large 60S subunit contains 3 rRNA molecules (25S, 5.8S and 5S rRNA) and at least 46 different proteins. eL20 forms multiple interactions with RNA and proteins in the central protuberance, connecting components of core functional centers that are located far apart.

It localises to the cytoplasm. In terms of biological role, component of the ribosome, a large ribonucleoprotein complex responsible for the synthesis of proteins in the cell. The small ribosomal subunit (SSU) binds messenger RNAs (mRNAs) and translates the encoded message by selecting cognate aminoacyl-transfer RNA (tRNA) molecules. The large subunit (LSU) contains the ribosomal catalytic site termed the peptidyl transferase center (PTC), which catalyzes the formation of peptide bonds, thereby polymerizing the amino acids delivered by tRNAs into a polypeptide chain. The nascent polypeptides leave the ribosome through a tunnel in the LSU and interact with protein factors that function in enzymatic processing, targeting, and the membrane insertion of nascent chains at the exit of the ribosomal tunnel. This is Large ribosomal subunit protein eL20A (rpl2001) from Schizosaccharomyces pombe (strain 972 / ATCC 24843) (Fission yeast).